The following is a 95-amino-acid chain: Aspartyl/glutamyl-tRNA(Asn/Gln) amidotransferase subunit C (95 aa).

This sequence belongs to the GatC family. Heterotrimer of A, B and C subunits.

It carries out the reaction L-glutamyl-tRNA(Gln) + L-glutamine + ATP + H2O = L-glutaminyl-tRNA(Gln) + L-glutamate + ADP + phosphate + H(+). The catalysed reaction is L-aspartyl-tRNA(Asn) + L-glutamine + ATP + H2O = L-asparaginyl-tRNA(Asn) + L-glutamate + ADP + phosphate + 2 H(+). Functionally, allows the formation of correctly charged Asn-tRNA(Asn) or Gln-tRNA(Gln) through the transamidation of misacylated Asp-tRNA(Asn) or Glu-tRNA(Gln) in organisms which lack either or both of asparaginyl-tRNA or glutaminyl-tRNA synthetases. The reaction takes place in the presence of glutamine and ATP through an activated phospho-Asp-tRNA(Asn) or phospho-Glu-tRNA(Gln). The chain is Aspartyl/glutamyl-tRNA(Asn/Gln) amidotransferase subunit C from Bradyrhizobium sp. (strain BTAi1 / ATCC BAA-1182).